The sequence spans 463 residues: Chromogranin-A (463 aa).

The signal sequence occupies residues 1 to 18; that stretch reads MRSTAVLALLLCAGQVFA. Residues Cys-35 and Cys-56 are joined by a disulfide bond. Residues 88 to 440 form a disordered region; sequence KERAQQPLKQ…ANRRAEDQEL (353 aa). Residues 92-116 show a composition bias toward low complexity; that stretch reads QQPLKQQQPPKQQQQQQQQQQQEQQ. A Phosphoserine modification is found at Ser-119. Basic and acidic residues predominate over residues 134 to 160; that stretch reads DAKHRDAAAEVPSRDTMEKRKDSDKGQ. Residues 196 to 208 show a composition bias toward polar residues; the sequence is TATNTQSPTSLPS. Ser-220, Ser-282, and Ser-308 each carry phosphoserine. The segment covering 301-310 has biased composition (basic and acidic residues); sequence GKGELEHSQQ. Position 329 is a glycine amide (Gly-329). 2 stretches are compositionally biased toward basic and acidic residues: residues 331–340 and 348–375; these read KGRELEHKQE and RLSREWEDKRWSRMDQLAKELTAEKRLE. Residues Ser-350 and Ser-383 each carry the phosphoserine modification. Met-384 is subject to Methionine sulfoxide. The span at 409 to 437 shows a compositional bias: basic and acidic residues; that stretch reads SSREDSVEARSDFEEKKEEEGSANRRAED. Phosphoserine is present on residues Ser-410, Ser-414, and Ser-430. A glycan (O-linked (Xyl...) (chondroitin sulfate) serine) is linked at Ser-430. A Pyrrolidone carboxylic acid modification is found at Gln-438. Ser-444 bears the Phosphoserine mark.

Belongs to the chromogranin/secretogranin protein family. Self-interacts; self-assembly is promoted in vitro by chondroitin sulfate attachment which occurs at mildly acidic pH conditions. Interacts with SCG3; this interaction is optimal in conditions mimicking the lumenal milieu of the trans-Golgi network, i.e. pH 5.5 and 10 mM Ca(+2). Interacts with ITPR1 in the secretory granules. Post-translationally, O-glycosylated; contains chondroitin sulfate (CS). CS attachment is pH-dependent, being observed at mildly acidic conditions of pH 5 but not at neutral pH, and promotes self-assembly in vitro.

It localises to the cytoplasmic vesicle. The protein resides in the secretory vesicle. The protein localises to the neuronal dense core vesicle. It is found in the secreted. Functionally, strongly inhibits glucose induced insulin release from the pancreas. Its function is as follows. Inhibits catecholamine release from chromaffin cells and noradrenergic neurons by acting as a non-competitive nicotinic cholinergic antagonist. Can induce mast cell migration, degranulation and production of cytokines and chemokines. Regulates granule biogenesis in endocrine cells by up-regulating the transcription of protease nexin 1 (SERPINE2) via a cAMP-PKA-SP1 pathway. This leads to inhibition of granule protein degradation in the Golgi complex which in turn promotes granule formation. Pyroglutaminated (pGlu)-serpinin exerts an antiapoptotic effect on cells exposed to oxidative stress. In Mus musculus (Mouse), this protein is Chromogranin-A (Chga).